The chain runs to 180 residues: MSGVVALGHASSWGAALVRISPYTFSAIGIAISIGVSVLGAAWGIYITGSSLIGAAIEAPRITSKNLISVIFCEAVAIYGVIVAIILQTKLESVPSSKMYDAESLRAGYAIFASGIIVGFANLVCGLCVGIIGSSCALSDAQNSTLFVKILVIEIFGSALGLFGVIVGIIMSAQATWPTK.

Residues 1–26 (MSGVVALGHASSWGAALVRISPYTFS) are Lumenal-facing. The helical transmembrane segment at 27-47 (AIGIAISIGVSVLGAAWGIYI) threads the bilayer. At 48–66 (TGSSLIGAAIEAPRITSKN) the chain is on the cytoplasmic side. The helical transmembrane segment at 67–87 (LISVIFCEAVAIYGVIVAIIL) threads the bilayer. Residues 88 to 110 (QTKLESVPSSKMYDAESLRAGYA) lie on the Lumenal side of the membrane. The chain crosses the membrane as a helical span at residues 111-131 (IFASGIIVGFANLVCGLCVGI). The Cytoplasmic segment spans residues 132-149 (IGSSCALSDAQNSTLFVK). The chain crosses the membrane as a helical span at residues 150 to 170 (ILVIEIFGSALGLFGVIVGII). Over 171 to 180 (MSAQATWPTK) the chain is Lumenal.

This sequence belongs to the V-ATPase proteolipid subunit family. As to quaternary structure, V-ATPase is a heteromultimeric enzyme composed of a peripheral catalytic V1 complex (components A to H) attached to an integral membrane V0 proton pore complex (components: a, c, c'', d and e). The proteolipid components c and c'' are present as a hexameric ring that forms the proton-conducting pore. Preferentially expressed in roots.

Its subcellular location is the endoplasmic reticulum membrane. It localises to the golgi apparatus membrane. Proton-conducting pore forming subunit of the membrane integral V0 complex of vacuolar ATPase. V-ATPase is responsible for acidifying a variety of intracellular compartments in eukaryotic cells. The chain is V-type proton ATPase subunit c''1 (VHA-c''1) from Arabidopsis thaliana (Mouse-ear cress).